Reading from the N-terminus, the 160-residue chain is MFGMGFFEILVVLVVAIIFLGPEKFPQAVVDVVKFFRAVKKTLNDAKDTLDKEINIEEIKKETLEYQKLFENKVESLKGVKIEELEDAKITAENEIKSIQDLMQDYQRSLETNTIPNHLNEEVSNEEALNKEVSSDESPKEVQLATDNNTKEHDKEKEHV.

Residues 1–21 form a helical membrane-spanning segment; it reads MFGMGFFEILVVLVVAIIFLG. Residues 118–160 form a disordered region; sequence HLNEEVSNEEALNKEVSSDESPKEVQLATDNNTKEHDKEKEHV. Basic and acidic residues-rich tracts occupy residues 128-140 and 149-160; these read ALNKEVSSDESPK and NTKEHDKEKEHV.

Belongs to the TatB family. As to quaternary structure, the Tat system comprises two distinct complexes: a TatABC complex, containing multiple copies of TatA, TatB and TatC subunits, and a separate TatA complex, containing only TatA subunits. Substrates initially bind to the TatABC complex, which probably triggers association of the separate TatA complex to form the active translocon.

Its subcellular location is the cell inner membrane. Part of the twin-arginine translocation (Tat) system that transports large folded proteins containing a characteristic twin-arginine motif in their signal peptide across membranes. Together with TatC, TatB is part of a receptor directly interacting with Tat signal peptides. TatB may form an oligomeric binding site that transiently accommodates folded Tat precursor proteins before their translocation. The polypeptide is Sec-independent protein translocase protein TatB (Helicobacter pylori (strain HPAG1)).